The chain runs to 248 residues: MAGHSQFKNIMHRKGRQDAQKSKLFSKLAREITVAAKLGTPDPAMNARLRAAMIAARAENMPKDNIERAIKKASGHDAESYDELRYEGYGPGGVAIIMEVLTDNRNRAASDIRSYFTKSGGNLGETGSVSFMFDRLGVVEYDADKASADDMLEAAVEAGADDVVSGEGGHEIYASQETFRDVARALEGKFGEARKVALIWKPQNTVAVDDNTGEKLLKLIDLLNEHDDVQNVYANFEVSDALMAKLGG.

The interval 1 to 21 (MAGHSQFKNIMHRKGRQDAQK) is disordered.

The protein belongs to the TACO1 family.

Its subcellular location is the cytoplasm. This is Probable transcriptional regulatory protein Nham_3525 from Nitrobacter hamburgensis (strain DSM 10229 / NCIMB 13809 / X14).